Here is a 201-residue protein sequence, read N- to C-terminus: FMN-dependent NADH:quinone oxidoreductase (201 aa).

FMN is bound by residues Ser-9 and 16-18 (SYS).

Belongs to the azoreductase type 1 family. In terms of assembly, homodimer. The cofactor is FMN.

It catalyses the reaction 2 a quinone + NADH + H(+) = 2 a 1,4-benzosemiquinone + NAD(+). The enzyme catalyses N,N-dimethyl-1,4-phenylenediamine + anthranilate + 2 NAD(+) = 2-(4-dimethylaminophenyl)diazenylbenzoate + 2 NADH + 2 H(+). Functionally, quinone reductase that provides resistance to thiol-specific stress caused by electrophilic quinones. Its function is as follows. Also exhibits azoreductase activity. Catalyzes the reductive cleavage of the azo bond in aromatic azo compounds to the corresponding amines. The chain is FMN-dependent NADH:quinone oxidoreductase from Mesomycoplasma hyopneumoniae (strain J / ATCC 25934 / NCTC 10110) (Mycoplasma hyopneumoniae).